The primary structure comprises 161 residues: Small ribosomal subunit protein uS9 (161 aa).

This sequence belongs to the universal ribosomal protein uS9 family.

The protein is Small ribosomal subunit protein uS9 of Methylobacterium radiotolerans (strain ATCC 27329 / DSM 1819 / JCM 2831 / NBRC 15690 / NCIMB 10815 / 0-1).